Reading from the N-terminus, the 227-residue chain is Sperm-associated antigen 7 (227 aa).

A disordered region spans residues 1–45 (MADLLGSILSSMEKPPSLGDQESRRKAREQAARLKKLQEQDKQQK). Ala-2 bears the N-acetylalanine mark. A compositionally biased stretch (basic and acidic residues) spans 21–45 (QESRRKAREQAARLKKLQEQDKQQK). A Nuclear localization signal motif is present at residues 35–51 (KKLQEQDKQQKVEFRKR). The 64-residue stretch at 46-109 (VEFRKRMEKE…DCRYVMIFKK (64 aa)) folds into the R3H domain. At Ser-114 the chain carries Phosphoserine. The disordered stretch occupies residues 118–161 (LDSYRHGEEWDPQKAEEKRKLKELAQKQEEEAAQQGPAVVSPAS). Over residues 119-147 (DSYRHGEEWDPQKAEEKRKLKELAQKQEE) the composition is skewed to basic and acidic residues. A Nuclear localization signal motif is present at residues 122–139 (RHGEEWDPQKAEEKRKLK). Phosphoserine occurs at positions 158 and 202.

The protein localises to the nucleus. The protein is Sperm-associated antigen 7 (Spag7) of Mus musculus (Mouse).